A 64-amino-acid polypeptide reads, in one-letter code: Beta-insect depressant toxin BmKIT4 (64 aa).

One can recognise an LCN-type CS-alpha/beta domain in the interval 1–61 (DGYIRGSNGC…TWKSESNTCG (61 aa)). 4 disulfides stabilise this stretch: Cys-10-Cys-60, Cys-14-Cys-35, Cys-21-Cys-42, and Cys-25-Cys-44. Cys-60 carries the cysteine amide modification.

It belongs to the long (4 C-C) scorpion toxin superfamily. Sodium channel inhibitor family. Beta subfamily. Expressed by the venom gland.

The protein localises to the secreted. Depressant insect beta-toxins cause a transient contraction paralysis followed by a slow flaccid paralysis. They bind voltage-independently at site-4 of sodium channels (Nav) and shift the voltage of activation toward more negative potentials thereby affecting sodium channel activation and promoting spontaneous and repetitive firing. This toxin is active only on insects. The polypeptide is Beta-insect depressant toxin BmKIT4 (Olivierus martensii (Manchurian scorpion)).